A 347-amino-acid chain; its full sequence is 3-isopropylmalate dehydrogenase (347 aa).

76–87 (GPKWTDPNNRPE) is a binding site for NAD(+). The substrate site is built by arginine 94, arginine 104, arginine 132, and aspartate 217. The Mg(2+) site is built by aspartate 217, aspartate 241, and aspartate 245. 275–287 (GSAPDIANEDKAN) lines the NAD(+) pocket.

This sequence belongs to the isocitrate and isopropylmalate dehydrogenases family. LeuB type 1 subfamily. Homodimer. It depends on Mg(2+) as a cofactor. Requires Mn(2+) as cofactor.

It is found in the cytoplasm. It catalyses the reaction (2R,3S)-3-isopropylmalate + NAD(+) = 4-methyl-2-oxopentanoate + CO2 + NADH. The protein operates within amino-acid biosynthesis; L-leucine biosynthesis; L-leucine from 3-methyl-2-oxobutanoate: step 3/4. Functionally, catalyzes the oxidation of 3-carboxy-2-hydroxy-4-methylpentanoate (3-isopropylmalate) to 3-carboxy-4-methyl-2-oxopentanoate. The product decarboxylates to 4-methyl-2 oxopentanoate. This Staphylococcus epidermidis (strain ATCC 35984 / DSM 28319 / BCRC 17069 / CCUG 31568 / BM 3577 / RP62A) protein is 3-isopropylmalate dehydrogenase.